The following is a 249-amino-acid chain: Ribonuclease HII (249 aa).

Residues 1–19 (MAPRPKAPPQPAEPDPALP) show a composition bias toward pro residues. The interval 1-31 (MAPRPKAPPQPAEPDPALPRPRGRPPKAGAV) is disordered. Residues 52–240 (APVAGADEVG…VREQQLGLFP (189 aa)) enclose the RNase H type-2 domain. D58, E59, and D149 together coordinate a divalent metal cation.

The protein belongs to the RNase HII family. It depends on Mn(2+) as a cofactor. Mg(2+) serves as cofactor.

Its subcellular location is the cytoplasm. It carries out the reaction Endonucleolytic cleavage to 5'-phosphomonoester.. Endonuclease that specifically degrades the RNA of RNA-DNA hybrids. This is Ribonuclease HII from Xanthobacter autotrophicus (strain ATCC BAA-1158 / Py2).